The following is a 318-amino-acid chain: Protoheme IX farnesyltransferase (318 aa).

9 consecutive transmembrane segments (helical) span residues 29-49 (IIPL…QGQV), 51-71 (PVLL…AQTI), 102-122 (LIFA…FANL), 123-143 (LAAS…THWL), 151-171 (IVIG…AVTG), 179-199 (LIFA…ALMI), 219-239 (ATVK…LLLV), 241-261 (PLHS…AVFI), and 280-300 (LFLY…IDSL).

It belongs to the UbiA prenyltransferase family. Protoheme IX farnesyltransferase subfamily.

Its subcellular location is the cell inner membrane. It carries out the reaction heme b + (2E,6E)-farnesyl diphosphate + H2O = Fe(II)-heme o + diphosphate. The protein operates within porphyrin-containing compound metabolism; heme O biosynthesis; heme O from protoheme: step 1/1. Its function is as follows. Converts heme B (protoheme IX) to heme O by substitution of the vinyl group on carbon 2 of heme B porphyrin ring with a hydroxyethyl farnesyl side group. This Trichormus variabilis (strain ATCC 29413 / PCC 7937) (Anabaena variabilis) protein is Protoheme IX farnesyltransferase.